A 291-amino-acid chain; its full sequence is MALAARLLPQFLHSRSLPCGAVRLRTPAVAEVRLPSATLCYFCRCRLGLGAALFPRSARALAASALPAQGSRWPVLSSPGLPAAFASFPACPQRSYSTEEKPQQHQKTKMIVLGFSNPINWVRTRIKAFLIWAYFDKEFSITEFSEGAKQAFAHVSKLLSQCKFDLLEELVAKEVLHALKEKVTSLPDNHKNALAANIDEIVFTSTGDISIYYDEKGRKFVNILMCFWYLTSANIPSETLRGASVFQVKLGNQNVETKQLLSASYEFQREFTQGVKPDWTIARIEHSKLLE.

The transit peptide at 1–96 directs the protein to the mitochondrion; it reads MALAARLLPQ…SFPACPQRSY (96 aa).

As to quaternary structure, interacts with AFG3L2. Interacts with SPG7. Interacts with SMDT1/EMRE (via the N-terminal transit peptide); interaction is direct and takes place before maturation of SMDT1/EMRE.

The protein localises to the mitochondrion matrix. In terms of biological role, promotes sorting of SMDT1/EMRE in mitochondria by ensuring its maturation. Interacts with the transit peptide region of SMDT1/EMRE precursor protein in the mitochondrial matrix, leading to protect it against protein degradation by YME1L1, thereby ensuring SMDT1/EMRE maturation by the mitochondrial processing peptidase (PMPCA and PMPCB). This chain is m-AAA protease-interacting protein 1, mitochondrial, found in Homo sapiens (Human).